A 614-amino-acid chain; its full sequence is DBH-like monooxygenase protein 1 homolog (614 aa).

Positions 1 to 22 (MSENKLFCAIVFLTSLFCSTCS) are cleaved as a signal peptide. Residues 23–593 (QGTRFVHSAA…CRKDSAIQCE (571 aa)) are Lumenal-facing. The DOMON domain maps to 37–150 (RRYNIKWGFD…STVRVIWAFH (114 aa)). Asparagine 116 carries N-linked (GlcNAc...) asparagine glycosylation. The active site involves tyrosine 205. Disulfide bonds link cysteine 207/cysteine 259 and cysteine 244/cysteine 271. The Cu cation site is built by histidine 237 and histidine 238. Asparagine 249 is a glycosylation site (N-linked (GlcNAc...) asparagine). Residues histidine 309, histidine 391, and histidine 393 each coordinate Cu cation. Disulfide bonds link cysteine 366–cysteine 482, cysteine 370–cysteine 552, and cysteine 445–cysteine 467. Histidine 391 is an active-site residue. A glycan (N-linked (GlcNAc...) asparagine) is linked at asparagine 454. Methionine 466 provides a ligand contact to Cu cation. An N-linked (GlcNAc...) asparagine glycan is attached at asparagine 519. Residues 594–612 (HSLALLLTACLLLILQTCL) traverse the membrane as a helical segment.

This sequence belongs to the copper type II ascorbate-dependent monooxygenase family. Cu(2+) serves as cofactor.

It localises to the endoplasmic reticulum membrane. In Danio rerio (Zebrafish), this protein is DBH-like monooxygenase protein 1 homolog (moxd1).